A 252-amino-acid polypeptide reads, in one-letter code: Uracil-DNA glycosylase (252 aa).

The active-site Proton acceptor is Asp-78.

Belongs to the uracil-DNA glycosylase (UDG) superfamily. UNG family.

The protein localises to the cytoplasm. It carries out the reaction Hydrolyzes single-stranded DNA or mismatched double-stranded DNA and polynucleotides, releasing free uracil.. Its function is as follows. Excises uracil residues from the DNA which can arise as a result of misincorporation of dUMP residues by DNA polymerase or due to deamination of cytosine. This chain is Uracil-DNA glycosylase, found in Bordetella avium (strain 197N).